Consider the following 672-residue polypeptide: Serine/threonine-protein kinase ppk16 (672 aa).

Residues 31-279 form the Protein kinase domain; it reads YRIESVVGEG…IDQIISHPYF (249 aa). ATP is bound by residues 37-45 and lysine 60; that span reads VGEGSFGKV. The Proton acceptor role is filled by aspartate 148. Serine 231 bears the Phosphoserine mark. Polar residues predominate over residues 375–384; it reads VSVMSNNQDS. 4 disordered regions span residues 375-396, 416-436, 464-572, and 632-672; these read VSVMSNNQDSLKSRHTSSDSSN, DTLSSSAIRPRTPSPSAENYL, NSFG…YSNV, and SGRK…TDLL. A compositionally biased stretch (polar residues) spans 472-487; sequence NLPQTTHVDTGEQNTP. The segment covering 508–523 has biased composition (low complexity); the sequence is SNSQNSPSKSSNLSIN. Residues 531–541 show a composition bias toward polar residues; sequence LQNTVISPQPT. 2 stretches are compositionally biased toward low complexity: residues 549–572 and 639–649; these read RSLSGRSSVASSRNSSRTRSYSNV and SSSSLMFNQSS.

It belongs to the protein kinase superfamily. Ser/Thr protein kinase family.

Its subcellular location is the cytoplasm. The enzyme catalyses L-seryl-[protein] + ATP = O-phospho-L-seryl-[protein] + ADP + H(+). It carries out the reaction L-threonyl-[protein] + ATP = O-phospho-L-threonyl-[protein] + ADP + H(+). In terms of biological role, has a role in meiosis. The protein is Serine/threonine-protein kinase ppk16 (ppk16) of Schizosaccharomyces pombe (strain 972 / ATCC 24843) (Fission yeast).